A 658-amino-acid chain; its full sequence is Katanin p80 WD40 repeat-containing subunit B1 (658 aa).

Residues 1–284 (MATPVVTKTA…VADLAICNDQ (284 aa)) form an interaction with dynein region. The segment at 1–300 (MATPVVTKTA…SQSNVSSYVV (300 aa)) is interaction with centrosomes. 6 WD repeats span residues 18 to 58 (AHAS…CIMS), 61 to 100 (GHTS…ILRT), 103 to 142 (GHKA…CVFR), 145 to 184 (GHSQ…MMSE), 187 to 226 (GHTG…VVSC), and 229 to 269 (GEPG…DVVL). The tract at residues 285-437 (LIGVAFSQSN…LPQLPVPNLE (153 aa)) is interaction with PAFAH1B1. Over residues 311–329 (VTQDPVQANQPLTQQTPNP) the composition is skewed to polar residues. Disordered regions lie at residues 311–419 (VTQD…EVSK) and 434–458 (PNLE…PDII). Residues 352–374 (HNSESERRSPSSEDDRDERESRA) show a composition bias toward basic and acidic residues. Threonine 395 carries the post-translational modification Phosphothreonine. The segment at 436 to 658 (LEVPARPSVM…ELHLLMASLD (223 aa)) is interaction with KATNA1 and NDEL1.

This sequence belongs to the WD repeat KATNB1 family. Interacts with KATNA1. This interaction enhances the microtubule binding and severing activity of KATNA1 and also targets this activity to the centrosome. This interaction is weakly competed by KATNBL1 which has a lower affinity for it. Interacts with ASPM; the katanin complex formation KATNA1:KATNB1 is required for the association of ASPM. Interacts with dynein, microtubules, NDEL1 and PAFAH1B1. Interacts with KATNAL1; this interaction is weakly competed by KATNBL1 which has a lower affinity for it. Interacts with CAMSAP2 and CAMSAP3; leading to regulate the length of CAMSAP-decorated microtubule stretches.

It is found in the cytoplasm. The protein resides in the cytoskeleton. The protein localises to the microtubule organizing center. It localises to the centrosome. Its subcellular location is the spindle pole. It is found in the spindle. In terms of biological role, participates in a complex which severs microtubules in an ATP-dependent manner. May act to target the enzymatic subunit of this complex to sites of action such as the centrosome. Microtubule severing may promote rapid reorganization of cellular microtubule arrays and the release of microtubules from the centrosome following nucleation. Microtubule release from the mitotic spindle poles may allow depolymerization of the microtubule end proximal to the spindle pole, leading to poleward microtubule flux and poleward motion of chromosome. The function in regulating microtubule dynamics at spindle poles seems to depend on the association of the katanin KATNA1:KATNB1 complex with ASPM which recruits it to microtubules. Reversely KATNA1:KATNB1 can enhance ASPM blocking activity on microtubule minus-end growth. Microtubule release within the cell body of neurons may be required for their transport into neuronal processes by microtubule-dependent motor proteins. This transport is required for axonal growth. The polypeptide is Katanin p80 WD40 repeat-containing subunit B1 (Katnb1) (Mus musculus (Mouse)).